Reading from the N-terminus, the 71-residue chain is uncharacterized protein (71 aa).

This is an uncharacterized protein from Lepidoptera (butterflies and moths).